Consider the following 300-residue polypeptide: Epimerase family protein MW0731 (300 aa).

Belongs to the NAD(P)-dependent epimerase/dehydratase family. SDR39U1 subfamily.

This is Epimerase family protein MW0731 from Staphylococcus aureus (strain MW2).